We begin with the raw amino-acid sequence, 236 residues long: N-acetyl-alpha-D-glucosaminyl L-malate deacetylase 1 (236 aa).

Positions 12, 15, and 113 each coordinate Zn(2+).

The protein belongs to the PIGL family. Zn(2+) serves as cofactor.

It catalyses the reaction (S)-malyl N-acetyl-alpha-D-glucosaminide + H2O = (S)-malyl alpha-D-glucosaminide + acetate. Involved in bacillithiol (BSH) biosynthesis. Catalyzes the second step of the pathway, the deacetylation of N-acetylglucosaminylmalate (GlcNAc-Mal) to glucosamine malate (GlcN-Mal). In Bacillus subtilis (strain 168), this protein is N-acetyl-alpha-D-glucosaminyl L-malate deacetylase 1.